Consider the following 342-residue polypeptide: L-threonine 3-dehydrogenase (342 aa).

Cysteine 38 is a Zn(2+) binding site. Residues threonine 40 and histidine 43 each act as charge relay system in the active site. The Zn(2+) site is built by histidine 63, glutamate 64, cysteine 93, cysteine 96, cysteine 99, and cysteine 107. Residues valine 175, aspartate 195, arginine 200, 262–264 (LGI), and 286–287 (IY) contribute to the NAD(+) site.

It belongs to the zinc-containing alcohol dehydrogenase family. In terms of assembly, homotetramer. It depends on Zn(2+) as a cofactor.

Its subcellular location is the cytoplasm. The enzyme catalyses L-threonine + NAD(+) = (2S)-2-amino-3-oxobutanoate + NADH + H(+). Its pathway is amino-acid degradation; L-threonine degradation via oxydo-reductase pathway; glycine from L-threonine: step 1/2. Catalyzes the NAD(+)-dependent oxidation of L-threonine to 2-amino-3-ketobutyrate. This Coxiella burnetii (strain Dugway 5J108-111) protein is L-threonine 3-dehydrogenase.